The chain runs to 404 residues: Cysteine desulfurase IscS (404 aa).

Pyridoxal 5'-phosphate is bound by residues A75–T76, N155, Q183, and S203–H205. An N6-(pyridoxal phosphate)lysine modification is found at K206. T243 serves as a coordination point for pyridoxal 5'-phosphate. The active-site Cysteine persulfide intermediate is the C328. Residue C328 coordinates [2Fe-2S] cluster.

The protein belongs to the class-V pyridoxal-phosphate-dependent aminotransferase family. NifS/IscS subfamily. In terms of assembly, homodimer. Forms a heterotetramer with IscU, interacts with other sulfur acceptors. Pyridoxal 5'-phosphate serves as cofactor.

It is found in the cytoplasm. It catalyses the reaction (sulfur carrier)-H + L-cysteine = (sulfur carrier)-SH + L-alanine. It functions in the pathway cofactor biosynthesis; iron-sulfur cluster biosynthesis. Its function is as follows. Master enzyme that delivers sulfur to a number of partners involved in Fe-S cluster assembly, tRNA modification or cofactor biosynthesis. Catalyzes the removal of elemental sulfur atoms from cysteine to produce alanine. Functions as a sulfur delivery protein for Fe-S cluster synthesis onto IscU, an Fe-S scaffold assembly protein, as well as other S acceptor proteins. The sequence is that of Cysteine desulfurase IscS from Serratia proteamaculans (strain 568).